We begin with the raw amino-acid sequence, 874 residues long: Alanine--tRNA ligase (874 aa).

Zn(2+)-binding residues include His-563, His-567, Cys-665, and His-669.

Belongs to the class-II aminoacyl-tRNA synthetase family. The cofactor is Zn(2+).

The protein localises to the cytoplasm. The enzyme catalyses tRNA(Ala) + L-alanine + ATP = L-alanyl-tRNA(Ala) + AMP + diphosphate. Catalyzes the attachment of alanine to tRNA(Ala) in a two-step reaction: alanine is first activated by ATP to form Ala-AMP and then transferred to the acceptor end of tRNA(Ala). Also edits incorrectly charged Ser-tRNA(Ala) and Gly-tRNA(Ala) via its editing domain. The chain is Alanine--tRNA ligase from Histophilus somni (strain 2336) (Haemophilus somnus).